The following is a 141-amino-acid chain: Small ribosomal subunit protein bS18c (141 aa).

Disordered regions lie at residues 14–55 (EFIA…IKPG) and 120–141 (IKRRESTARKKRKKGFRKRPKK). Positions 24–34 (PKAPLQPPLPP) are enriched in pro residues. Residues 35–51 (SKRKGKPPKSPRRRSSR) show a composition bias toward basic residues.

This sequence belongs to the bacterial ribosomal protein bS18 family. In terms of assembly, part of the 30S ribosomal subunit.

It localises to the plastid. The protein resides in the chloroplast. This Pelargonium hortorum (Common geranium) protein is Small ribosomal subunit protein bS18c.